We begin with the raw amino-acid sequence, 328 residues long: Arabinose 5-phosphate isomerase KdsD (328 aa).

The region spanning Cys-42–Phe-184 is the SIS domain. Residues Gly-75 to Thr-76, His-82, His-88, Ala-114 to His-123, Lys-148 to Ala-150, Thr-222, and Asp-275 each bind substrate. His-82 serves as a coordination point for Zn(2+). The region spanning Met-210–Val-268 is the CBS 1 domain. The region spanning Met-277–Val-328 is the CBS 2 domain.

The protein belongs to the SIS family. GutQ/KpsF subfamily. In terms of assembly, homotetramer.

It catalyses the reaction D-arabinose 5-phosphate = D-ribulose 5-phosphate. Its pathway is carbohydrate biosynthesis; 3-deoxy-D-manno-octulosonate biosynthesis; 3-deoxy-D-manno-octulosonate from D-ribulose 5-phosphate: step 1/3. It functions in the pathway bacterial outer membrane biogenesis; lipopolysaccharide biosynthesis. Involved in the biosynthesis of 3-deoxy-D-manno-octulosonate (KDO), a unique 8-carbon sugar component of lipopolysaccharides (LPSs). Catalyzes the reversible aldol-ketol isomerization between D-ribulose 5-phosphate (Ru5P) and D-arabinose 5-phosphate (A5P). In Escherichia coli O157:H7, this protein is Arabinose 5-phosphate isomerase KdsD (kdsD).